A 245-amino-acid chain; its full sequence is Uridylate kinase (245 aa).

15–18 (KLSG) is an ATP binding site. An involved in allosteric activation by GTP region spans residues 23–28 (GEEGFG). UMP is bound at residue glycine 57. ATP is bound by residues glycine 58 and arginine 62. UMP is bound by residues aspartate 77 and 138–145 (TGNPFCTT). ATP contacts are provided by threonine 165, tyrosine 171, and aspartate 174.

It belongs to the UMP kinase family. In terms of assembly, homohexamer.

It is found in the cytoplasm. The enzyme catalyses UMP + ATP = UDP + ADP. Its pathway is pyrimidine metabolism; CTP biosynthesis via de novo pathway; UDP from UMP (UMPK route): step 1/1. Allosterically activated by GTP. Inhibited by UTP. Catalyzes the reversible phosphorylation of UMP to UDP. In Shewanella putrefaciens (strain CN-32 / ATCC BAA-453), this protein is Uridylate kinase.